The sequence spans 385 residues: 1-deoxy-D-xylulose 5-phosphate reductoisomerase 1 (385 aa).

Residues Thr11, Gly12, Ser13, Ile14, Asn39, and Asn122 each contribute to the NADPH site. Residue Lys123 participates in 1-deoxy-D-xylulose 5-phosphate binding. Glu124 contacts NADPH. Residue Asp148 participates in Mn(2+) binding. Ser149, Glu150, Ser174, and His197 together coordinate 1-deoxy-D-xylulose 5-phosphate. Residue Glu150 participates in Mn(2+) binding. An NADPH-binding site is contributed by Gly203. 1-deoxy-D-xylulose 5-phosphate is bound by residues Ser210, Asn215, Lys216, and Glu219. Glu219 serves as a coordination point for Mn(2+).

It belongs to the DXR family. Mg(2+) is required as a cofactor. Mn(2+) serves as cofactor.

The catalysed reaction is 2-C-methyl-D-erythritol 4-phosphate + NADP(+) = 1-deoxy-D-xylulose 5-phosphate + NADPH + H(+). Its pathway is isoprenoid biosynthesis; isopentenyl diphosphate biosynthesis via DXP pathway; isopentenyl diphosphate from 1-deoxy-D-xylulose 5-phosphate: step 1/6. Its function is as follows. Catalyzes the NADPH-dependent rearrangement and reduction of 1-deoxy-D-xylulose-5-phosphate (DXP) to 2-C-methyl-D-erythritol 4-phosphate (MEP). The sequence is that of 1-deoxy-D-xylulose 5-phosphate reductoisomerase 1 from Bacillus anthracis.